The following is a 176-amino-acid chain: Protein singles bar (176 aa).

Transmembrane regions (helical) follow at residues L13 to I35, F71 to F91, L111 to L131, and G140 to L160. The region spanning F30–R173 is the MARVEL domain.

It localises to the membrane. Essential for myoblast fusion in developing embryos and pupae, and consequently is essential for muscle formation in adults. Required for progression past the pre-fusion complex stage of myoblast fusion. This is Protein singles bar from Drosophila melanogaster (Fruit fly).